A 364-amino-acid chain; its full sequence is mRNA decay activator protein ZFP36L2-B (364 aa).

The segment covering 102-111 (SFSENGERSQ) has biased composition (basic and acidic residues). A disordered region spans residues 102–129 (SFSENGERSQHLLHLQQQQQQQKAGAQV). Positions 113-123 (LLHLQQQQQQQ) are enriched in low complexity. The RNA-binding motif lies at 133-138 (RYKTEL). 2 consecutive C3H1-type zinc fingers follow at residues 133 to 161 (RYKT…HGFH) and 171 to 199 (KYKT…HNAE). The tract at residues 150 to 191 (YGEKCQFAHGFHELRSLTRHPKYKTELCRTFHTIGFCPYGPR) is RNA-binding. The disordered stretch occupies residues 308–350 (SESPVFDAPPSPPDSLSDRDSYLSGSLSSGSLSGSDSPTLDSN). The segment covering 329-348 (YLSGSLSSGSLSGSDSPTLD) has biased composition (low complexity).

Phosphorylated. In terms of tissue distribution, remains unlocalized in the egg and early embryo. From stage 21 (late neurula), expressed around the pronephros in the anterior crests, pharyngeal arch, hindbrain, mesodermal tissues around the pronephros and tail-bud. This expression pattern is maintained up to the tadpole stage.

The protein resides in the nucleus. Its subcellular location is the cytoplasm. Its function is as follows. Zinc-finger RNA-binding protein that destabilizes several cytoplasmic AU-rich element (ARE)-containing mRNA transcripts by promoting their poly(A) tail removal or deadenylation, and hence provide a mechanism for attenuating protein synthesis. Acts as a 3'-untranslated region (UTR) ARE mRNA-binding adapter protein to communicate signaling events to the mRNA decay machinery. Functions by recruiting the CCR4-NOT deadenylase complex and probably other components of the cytoplasmic RNA decay machinery to the bound ARE-containing mRNAs, and hence promotes ARE-mediated mRNA deadenylation and decay processes. Binds to 3'-UTR ARE of numerous mRNAs. Also induces the degradation of ARE-containing mRNAs even in absence of poly(A) tail. Required for tubulogenesis during pronephros development. This Xenopus laevis (African clawed frog) protein is mRNA decay activator protein ZFP36L2-B (zfp36l2-B).